Reading from the N-terminus, the 944-residue chain is Protein translocase subunit SecA (944 aa).

ATP-binding positions include glutamine 87, 105 to 109, and aspartate 494; that span reads GEGKT. The disordered stretch occupies residues 894 to 944; sequence HAAAAGDGEEKPRPKQETVVRTQPKVGRNDPCPCGSGKKYKKCHGATEAAV. Residues 901–911 are compositionally biased toward basic and acidic residues; the sequence is GEEKPRPKQET. Zn(2+) is bound by residues cysteine 925, cysteine 927, cysteine 936, and histidine 937.

It belongs to the SecA family. As to quaternary structure, monomer and homodimer. Part of the essential Sec protein translocation apparatus which comprises SecA, SecYEG and auxiliary proteins SecDF-YajC and YidC. Zn(2+) is required as a cofactor.

It is found in the cell inner membrane. The protein resides in the cytoplasm. It catalyses the reaction ATP + H2O + cellular proteinSide 1 = ADP + phosphate + cellular proteinSide 2.. Functionally, part of the Sec protein translocase complex. Interacts with the SecYEG preprotein conducting channel. Has a central role in coupling the hydrolysis of ATP to the transfer of proteins into and across the cell membrane, serving as an ATP-driven molecular motor driving the stepwise translocation of polypeptide chains across the membrane. This Anaeromyxobacter sp. (strain Fw109-5) protein is Protein translocase subunit SecA.